We begin with the raw amino-acid sequence, 903 residues long: Immunoglobulin superfamily member 22 (903 aa).

4 Ig-like domains span residues 67–158 (PEFV…LLVT), 232–322 (EAIR…AELT), 418–508 (PIKF…AIVT), and 606–696 (PSVL…LHLS). Fibronectin type-III domains are found at residues 703–798 (FASQ…AKDP) and 804–898 (LVQD…MPPP).

This Homo sapiens (Human) protein is Immunoglobulin superfamily member 22 (IGSF22).